The chain runs to 300 residues: Cation-efflux pump FieF (300 aa).

Residues 24-44 (LLIKIFAWWYTGSVSILAALV) form a helical membrane-spanning segment. Positions 45 and 49 each coordinate Zn(2+). Transmembrane regions (helical) follow at residues 82 to 102 (AALA…LTGI) and 114 to 134 (AGVG…LVTF). Zn(2+)-binding residues include His-153 and Asp-157. 2 consecutive transmembrane segments (helical) span residues 156 to 176 (SDVM…YGWH) and 178 to 198 (ADAL…LRMG).

Belongs to the cation diffusion facilitator (CDF) transporter (TC 2.A.4) family. FieF subfamily. In terms of assembly, homodimer.

It localises to the cell inner membrane. The enzyme catalyses Zn(2+)(in) + H(+)(out) = Zn(2+)(out) + H(+)(in). It carries out the reaction Cd(2+)(in) + H(+)(out) = Cd(2+)(out) + H(+)(in). The catalysed reaction is Fe(2+)(in) + H(+)(out) = Fe(2+)(out) + H(+)(in). In terms of biological role, divalent metal cation transporter which exports Zn(2+), Cd(2+) and possibly Fe(2+). May be involved in zinc and iron detoxification by efflux. This is Cation-efflux pump FieF from Klebsiella pneumoniae (strain 342).